The sequence spans 71 residues: Small ribosomal subunit protein bS21 (71 aa).

The protein belongs to the bacterial ribosomal protein bS21 family.

This chain is Small ribosomal subunit protein bS21, found in Vesicomyosocius okutanii subsp. Calyptogena okutanii (strain HA).